Here is a 188-residue protein sequence, read N- to C-terminus: Large ribosomal subunit protein uL5 (188 aa).

This sequence belongs to the universal ribosomal protein uL5 family. In terms of assembly, part of the 50S ribosomal subunit; part of the 5S rRNA/L5/L18/L25 subcomplex. Contacts the 5S rRNA and the P site tRNA. Forms a bridge to the 30S subunit in the 70S ribosome.

In terms of biological role, this is one of the proteins that bind and probably mediate the attachment of the 5S RNA into the large ribosomal subunit, where it forms part of the central protuberance. In the 70S ribosome it contacts protein S13 of the 30S subunit (bridge B1b), connecting the 2 subunits; this bridge is implicated in subunit movement. Contacts the P site tRNA; the 5S rRNA and some of its associated proteins might help stabilize positioning of ribosome-bound tRNAs. This Aquifex pyrophilus protein is Large ribosomal subunit protein uL5.